The following is a 222-amino-acid chain: RNA-binding protein KhpB (222 aa).

The interval 2–51 (DMVTVTAKTVEEAVTKALIELQTTSDKLTYEIVEKGSAGFLGIGSKPAII) is jag_N domain. One can recognise a KH domain in the interval 54–133 (KRKETLQDKA…KSSSDYIRVK (80 aa)). An R3H domain is found at 138-204 (NYRERRKETL…EEPFRHVIIS (67 aa)).

Belongs to the KhpB RNA-binding protein family. As to quaternary structure, forms a complex with KhpA. Homodimer or homotrimer.

The protein localises to the cytoplasm. Its function is as follows. A probable RNA chaperone. Forms a complex with KhpA which binds to cellular RNA and controls its expression. Plays a role in peptidoglycan (PG) homeostasis and cell length regulation. This is RNA-binding protein KhpB from Clostridium symbiosum (Bacteroides symbiosus).